The following is a 435-amino-acid chain: Citrate synthase (435 aa).

Catalysis depends on residues His311 and Asp370.

This sequence belongs to the citrate synthase family. Homohexamer.

The catalysed reaction is oxaloacetate + acetyl-CoA + H2O = citrate + CoA + H(+). It participates in carbohydrate metabolism; tricarboxylic acid cycle; isocitrate from oxaloacetate: step 1/2. The chain is Citrate synthase (gltA) from Rickettsia africae (strain ESF-5).